A 182-amino-acid chain; its full sequence is Adenine phosphoribosyltransferase (182 aa).

Belongs to the purine/pyrimidine phosphoribosyltransferase family. In terms of assembly, homodimer.

It localises to the cytoplasm. The catalysed reaction is AMP + diphosphate = 5-phospho-alpha-D-ribose 1-diphosphate + adenine. It functions in the pathway purine metabolism; AMP biosynthesis via salvage pathway; AMP from adenine: step 1/1. Functionally, catalyzes a salvage reaction resulting in the formation of AMP, that is energically less costly than de novo synthesis. The protein is Adenine phosphoribosyltransferase of Campylobacter curvus (strain 525.92).